The following is a 61-amino-acid chain: Beta-insect depressant toxin BaIT2 (61 aa).

Residues aspartate 1–glycine 61 form the LCN-type CS-alpha/beta domain. 4 disulfide bridges follow: cysteine 10–cysteine 60, cysteine 14–cysteine 35, cysteine 21–cysteine 42, and cysteine 25–cysteine 44.

Belongs to the long (4 C-C) scorpion toxin superfamily. Sodium channel inhibitor family. Beta subfamily. Expressed by the venom gland.

The protein localises to the secreted. Functionally, depressant insect beta-toxins cause a transient contraction paralysis followed by a slow flaccid paralysis. They bind voltage-independently at site-4 of sodium channels (Nav) and shift the voltage of activation toward more negative potentials thereby affecting sodium channel activation and promoting spontaneous and repetitive firing. This toxin is active only on insects. The chain is Beta-insect depressant toxin BaIT2 from Buthacus arenicola (North African scorpion).